The primary structure comprises 499 residues: Guanosine-5'-triphosphate,3'-diphosphate pyrophosphatase (499 aa).

It belongs to the GppA/Ppx family. GppA subfamily.

The catalysed reaction is guanosine 3'-diphosphate 5'-triphosphate + H2O = guanosine 3',5'-bis(diphosphate) + phosphate + H(+). Its pathway is purine metabolism; ppGpp biosynthesis; ppGpp from GTP: step 2/2. Its function is as follows. Catalyzes the conversion of pppGpp to ppGpp. Guanosine pentaphosphate (pppGpp) is a cytoplasmic signaling molecule which together with ppGpp controls the 'stringent response', an adaptive process that allows bacteria to respond to amino acid starvation, resulting in the coordinated regulation of numerous cellular activities. The chain is Guanosine-5'-triphosphate,3'-diphosphate pyrophosphatase from Klebsiella pneumoniae subsp. pneumoniae (strain ATCC 700721 / MGH 78578).